Here is a 620-residue protein sequence, read N- to C-terminus: MPLLFLERFPWPSLQTYTALSALLLAGTVLSAYSTVRDSEFSSALSEGPQNEELKLENLGNVATGVLLHLITDSLFVWVMVNTACCILMLIGKVIQCIVFGPLRVSEKQHLKDKFWNFIFYKFIFIFGVLNVQRVEEVVLWCLWFSMLIFLHLMVQLCKDRFEYLSFSPTTPMSSHVRVLALLVSVLSCCGGLAVLCALAGHIHGMHTVAFMAAECLLVTVRTGHVIIRYSIHLWDLNHEGTWENKSSYIYYTDFIMELAILSLDLMHHIHMLLFGNIWLSMASLVIFMQLRHLFHEVQRRIRRHKNYLRVIDNMESRFAVATPEELAANNDDCAICWDSMTTARKLPCGHLFHNSCLRSWLEQDTSCPTCRMSLNIHEGRREREEGQREPLEDNMAAAGAADARAHINQHNHFFHFDGSRIASWLPSFSVEVMHTTNILGIAQANNSQLNGMAHQIQEMFPQVPYHLILQDLQLTRSVEVTTDNILEGRIQVPFPTQSTDRTPIQMNAASEDGAGASSGSEVAAPEAEDFEVRGSRFSKSADERQRMLMQRKEELLLRARRRYLHKKPEDGDAYSVLGADNDDSVPSIEDEDSDSVTLRRRRLAAAAERRILRQEPSPF.

Helical transmembrane passes span 75–95 (LFVW…GKVI), 115–135 (FWNF…VQRV), 138–158 (VVLW…VQLC), 179–199 (VLAL…LCAL), 201–221 (GHIH…LVTV), 247–267 (SSYI…LDLM), and 269–289 (HIHM…VIFM). An RING-type; atypical zinc finger spans residues 334 to 372 (CAICWDSMTTARKLPCGHLFHNSCLRSWLEQDTSCPTCR). In terms of domain architecture, CUE spans 449-491 (QLNGMAHQIQEMFPQVPYHLILQDLQLTRSVEVTTDNILEGRI). Residues 510–526 (ASEDGAGASSGSEVAAP) are compositionally biased toward low complexity. 2 disordered regions span residues 510–544 (ASED…SADE) and 569–598 (PEDG…DSVT). The span at 531–544 (FEVRGSRFSKSADE) shows a compositional bias: basic and acidic residues. Residues 581–595 (DNDDSVPSIEDEDSD) show a composition bias toward acidic residues.

Widely expressed.

It is found in the endoplasmic reticulum membrane. It catalyses the reaction [E2 ubiquitin-conjugating enzyme]-S-ubiquitinyl-L-cysteine + [acceptor protein]-L-cysteine = [E2 ubiquitin-conjugating enzyme]-L-cysteine + [acceptor protein]-S-ubiquitinyl-L-cysteine.. The protein operates within protein modification; protein ubiquitination. In terms of biological role, E3 ubiquitin-protein ligase that mediates the polyubiquitination of lysine and cysteine residues on target proteins. May participate in the final step of endoplasmic reticulum-associated degradation (ERAD). Required for proper lipid homeostasis. In Danio rerio (Zebrafish), this protein is E3 ubiquitin-protein ligase AMFR.